The sequence spans 263 residues: UPF0758 protein NGR_c13970 (263 aa).

The region spanning 141-263 (VLSSWSAVID…HVSMKGLRLF (123 aa)) is the MPN domain. Residues His212, His214, and Asp225 each contribute to the Zn(2+) site. The JAMM motif signature appears at 212–225 (HNHPSGDPTPSRAD).

It belongs to the UPF0758 family.

This chain is UPF0758 protein NGR_c13970, found in Sinorhizobium fredii (strain NBRC 101917 / NGR234).